Here is a 696-residue protein sequence, read N- to C-terminus: DNA ligase (696 aa).

Residues 36–40 (DAEYD), 85–86 (SL), and Glu-123 contribute to the NAD(+) site. The N6-AMP-lysine intermediate role is filled by Lys-125. NAD(+) contacts are provided by Arg-146, Glu-181, Lys-319, and Lys-343. Residues Cys-437, Cys-440, Cys-455, and Cys-461 each contribute to the Zn(2+) site. The region spanning 618–696 (PEGTSLAGKT…EDGLKALLGL (79 aa)) is the BRCT domain.

This sequence belongs to the NAD-dependent DNA ligase family. LigA subfamily. Mg(2+) serves as cofactor. Requires Mn(2+) as cofactor.

It catalyses the reaction NAD(+) + (deoxyribonucleotide)n-3'-hydroxyl + 5'-phospho-(deoxyribonucleotide)m = (deoxyribonucleotide)n+m + AMP + beta-nicotinamide D-nucleotide.. Functionally, DNA ligase that catalyzes the formation of phosphodiester linkages between 5'-phosphoryl and 3'-hydroxyl groups in double-stranded DNA using NAD as a coenzyme and as the energy source for the reaction. It is essential for DNA replication and repair of damaged DNA. The chain is DNA ligase from Bordetella parapertussis (strain 12822 / ATCC BAA-587 / NCTC 13253).